Reading from the N-terminus, the 357-residue chain is MKGKFLKVSSLFVATLTTATLVSSPAANALSSKAMDNHPQQTQTDKQQTPKIQKGGNLKPLEQRERANVILPNNDRHQITDTTNGHYAPVTYIQVEAPTGTFIASGVVVGKDTLLTNKHIVDATHGDPHALKAFASAINQDNYPNGGFTAEQITKYSGEGDLAIVKFSPNEQNKHIGEVVKPATMSNNAETQVNQNITVTGYPGDKPVATMWESKGKITYLKGEAMQYDLSTTGGNSGSPVFNEKNEVIGIHWGGVPNQFNGAVFINENVRNFLKQNIEDINFANDDHPNNPDNPDNPNNPDNPNNPDNPNNPDNPDNPNNPDNPNNPDNPNNPDQPNNPNNPDNGDNNNSDNPDAA.

The first 29 residues, 1–29 (MKGKFLKVSSLFVATLTTATLVSSPAANA), serve as a signal peptide directing secretion. The propeptide occupies 30 to 68 (LSSKAMDNHPQQTQTDKQQTPKIQKGGNLKPLEQRERAN). A disordered region spans residues 33-58 (KAMDNHPQQTQTDKQQTPKIQKGGNL). Positions 40–54 (QQTQTDKQQTPKIQK) are enriched in low complexity. Residues H119, D161, and S237 each act as charge relay system in the active site. The interval 282–357 (NFANDDHPNN…NNNSDNPDAA (76 aa)) is disordered. Tandem repeats lie at residues 289–291 (PNN), 292–294 (PDN), 295–297 (PDN), 298–300 (PNN), 301–303 (PDN), 304–306 (PNN), 307–309 (PDN), 310–312 (PNN), 313–315 (PDN), 316–318 (PDN), 319–321 (PNN), 322–324 (PDN), 325–327 (PNN), 328–330 (PDN), 331–333 (PNN), 337–339 (PNN), 340–342 (PNN), and 343–345 (PDN). The segment at 289–345 (PNNPDNPDNPNNPDNPNNPDNPNNPDNPDNPNNPDNPNNPDNPNNPDQPNNPNNPDN) is 18 X 3 AA repeats of P-[DN]-N. Residues 291–357 (NPDNPDNPNN…NNNSDNPDAA (67 aa)) are compositionally biased toward low complexity.

It belongs to the peptidase S1B family. Post-translationally, proteolytically cleaved by aureolysin (aur). This cleavage leads to the activation of SspA.

The protein resides in the secreted. The catalysed reaction is Preferential cleavage: Glu-|-Xaa, Asp-|-Xaa.. Preferentially cleaves peptide bonds on the carboxyl-terminal side of aspartate and glutamate. Along with other extracellular proteases it is involved in colonization and infection of human tissues. Required for proteolytic maturation of thiol protease SspB and inactivation of SspC, an inhibitor of SspB. It is the most important protease for degradation of fibronectin-binding protein (FnBP) and surface protein A, which are involved in adherence to host cells. May also protect bacteria against host defense mechanism by cleaving the immunoglobulin classes IgG, IgA and IgM. May be involved in the stability of secreted lipases. The polypeptide is Glutamyl endopeptidase (sspA) (Staphylococcus aureus (strain MRSA252)).